The sequence spans 227 residues: ATP phosphoribosyltransferase (227 aa).

It belongs to the ATP phosphoribosyltransferase family. Short subfamily. As to quaternary structure, heteromultimer composed of HisG and HisZ subunits.

It is found in the cytoplasm. It carries out the reaction 1-(5-phospho-beta-D-ribosyl)-ATP + diphosphate = 5-phospho-alpha-D-ribose 1-diphosphate + ATP. Its pathway is amino-acid biosynthesis; L-histidine biosynthesis; L-histidine from 5-phospho-alpha-D-ribose 1-diphosphate: step 1/9. Functionally, catalyzes the condensation of ATP and 5-phosphoribose 1-diphosphate to form N'-(5'-phosphoribosyl)-ATP (PR-ATP). Has a crucial role in the pathway because the rate of histidine biosynthesis seems to be controlled primarily by regulation of HisG enzymatic activity. The polypeptide is ATP phosphoribosyltransferase (Bordetella avium (strain 197N)).